Here is a 480-residue protein sequence, read N- to C-terminus: Citrate synthase 1, peroxisomal (480 aa).

Active-site residues include H321, H360, and D416.

Belongs to the citrate synthase family. In terms of tissue distribution, expressed only in siliques. Not expressed in flower, stem, cauline leaf, young leaf, mature leaf and senescent leaf.

Its subcellular location is the peroxisome. It carries out the reaction oxaloacetate + acetyl-CoA + H2O = citrate + CoA + H(+). The protein operates within carbohydrate metabolism; tricarboxylic acid cycle; isocitrate from oxaloacetate: step 1/2. In Arabidopsis thaliana (Mouse-ear cress), this protein is Citrate synthase 1, peroxisomal (CSY1).